The following is a 199-amino-acid chain: Chromophore lyase CpcT/CpeT 2 (199 aa).

The protein belongs to the CpcT/CpeT biliprotein lyase family.

Covalently attaches a chromophore to Cys residue(s) of phycobiliproteins. This chain is Chromophore lyase CpcT/CpeT 2, found in Synechococcus sp. (strain JA-3-3Ab) (Cyanobacteria bacterium Yellowstone A-Prime).